Consider the following 342-residue polypeptide: Protein RecA (342 aa).

It belongs to the RecA family.

The protein resides in the cytoplasm. Its function is as follows. Can catalyze the hydrolysis of ATP in the presence of single-stranded DNA, the ATP-dependent uptake of single-stranded DNA by duplex DNA, and the ATP-dependent hybridization of homologous single-stranded DNAs. It interacts with LexA causing its activation and leading to its autocatalytic cleavage. This is Protein RecA from Pectobacterium carotovorum (Erwinia carotovora).